The sequence spans 285 residues: Glutamate racemase (285 aa).

Residues 28–29 (DS) and 60–61 (YG) contribute to the substrate site. The active-site Proton donor/acceptor is C92. A substrate-binding site is contributed by 93–94 (NT). UDP-N-acetyl-alpha-D-muramoyl-L-alanine contacts are provided by residues R104 and 113-119 (GVVPAIK). The active-site Proton donor/acceptor is C204. A substrate-binding site is contributed by 205–206 (TH).

This sequence belongs to the aspartate/glutamate racemases family. Monomer.

It carries out the reaction L-glutamate = D-glutamate. Its pathway is cell wall biogenesis; peptidoglycan biosynthesis. The low basal catalytic activity in increased 1000-fold in the presence of UDP-MurNAc-L-Ala, the product of the preceding enzyme in the peptidoglycan biosynthesis. In terms of biological role, provides the (R)-glutamate required for cell wall biosynthesis. This is Glutamate racemase from Escherichia coli (strain K12).